The primary structure comprises 414 residues: 3-oxoacyl-[acyl-carrier-protein] synthase 2 (414 aa).

The 408-residue stretch at 4–411 (NKRVVITGMG…GHNAVLVFKK (408 aa)) folds into the Ketosynthase family 3 (KS3) domain. Active-site for beta-ketoacyl synthase activity residues include cysteine 165, histidine 304, and histidine 341.

Belongs to the thiolase-like superfamily. Beta-ketoacyl-ACP synthases family.

The enzyme catalyses a fatty acyl-[ACP] + malonyl-[ACP] + H(+) = a 3-oxoacyl-[ACP] + holo-[ACP] + CO2. The catalysed reaction is (9Z)-hexadecenoyl-[ACP] + malonyl-[ACP] + H(+) = 3-oxo-(11Z)-octadecenoyl-[ACP] + holo-[ACP] + CO2. It participates in lipid metabolism; fatty acid biosynthesis. Functionally, involved in the type II fatty acid elongation cycle. Catalyzes the elongation of a wide range of acyl-ACP by the addition of two carbons from malonyl-ACP to an acyl acceptor. Can efficiently catalyze the conversion of palmitoleoyl-ACP (cis-hexadec-9-enoyl-ACP) to cis-vaccenoyl-ACP (cis-octadec-11-enoyl-ACP), an essential step in the thermal regulation of fatty acid composition. The polypeptide is 3-oxoacyl-[acyl-carrier-protein] synthase 2 (fabF) (Staphylococcus aureus (strain Mu50 / ATCC 700699)).